A 201-amino-acid polypeptide reads, in one-letter code: Retinol-binding protein 4 (201 aa).

Positions 1 to 18 are cleaved as a signal peptide; it reads MEWVWALVVLAALGSAGA. 3 disulfide bridges follow: Cys22–Cys178, Cys88–Cys192, and Cys138–Cys147. Gln116 provides a ligand contact to substrate. Arg139 carries the post-translational modification Omega-N-methylarginine.

The protein belongs to the calycin superfamily. Lipocalin family. As to quaternary structure, interacts with TTR. Interaction with TTR prevents its loss by filtration through the kidney glomeruli. Interacts with STRA6.

It localises to the secreted. Functionally, retinol-binding protein that mediates retinol transport in blood plasma. Delivers retinol from the liver stores to the peripheral tissues. Transfers the bound all-trans retinol to STRA6, that then facilitates retinol transport across the cell membrane. This is Retinol-binding protein 4 (RBP4) from Equus caballus (Horse).